Consider the following 457-residue polypeptide: Cysteine--tRNA ligase (457 aa).

C28 is a binding site for Zn(2+). Residues 30–40 carry the 'HIGH' region motif; it reads ITVYDLCHIGH. Residues C209, H234, and E238 each coordinate Zn(2+). The 'KMSKS' region motif lies at 266-270; the sequence is KMSKS. K269 is a binding site for ATP.

This sequence belongs to the class-I aminoacyl-tRNA synthetase family. In terms of assembly, monomer. Zn(2+) is required as a cofactor.

The protein resides in the cytoplasm. The enzyme catalyses tRNA(Cys) + L-cysteine + ATP = L-cysteinyl-tRNA(Cys) + AMP + diphosphate. The polypeptide is Cysteine--tRNA ligase (Sodalis glossinidius (strain morsitans)).